Reading from the N-terminus, the 355-residue chain is MLEKEKKCIGIIFGGESNEHDVSVSSAKTVFKALISKTNINRFWVKAFYINKHGVWLDNDQSLVLLKEKRKNETIDKNQVFPKREINFLNTIEFQGIDIWFPLLHGVNGEDGAIHGLLKFTQKPIVGGGILGSALGMDKILMKKIFSHLEIPQVNYLDIQNQDLSDDKVKNNLSVEIIEKLKLPVFVKPANSGSSLGISKAKTRSEIIKALQKAWEIDSRIVIEEGLDVRELECGIIGNLKLTASEIGEVSYSTDWYDYDSKYSMDNQIIIPADIDSQISEQIKDIAIRSCRALNIYGFARVDFFLEKISNKIFLNEINTIPGFTSKSMFPMLWNASGLNIDQLVAKLVDISSDL.

The ATP-grasp domain occupies 143–350 (KKIFSHLEIP…IDQLVAKLVD (208 aa)). An ATP-binding site is contributed by 178-233 (IEKLKLPVFVKPANSGSSLGISKAKTRSEIIKALQKAWEIDSRIVIEEGLDVRELE). Residues Asp-303, Glu-317, and Asn-319 each coordinate Mg(2+).

Belongs to the D-alanine--D-alanine ligase family. Mg(2+) serves as cofactor. Mn(2+) is required as a cofactor.

It is found in the cytoplasm. It catalyses the reaction 2 D-alanine + ATP = D-alanyl-D-alanine + ADP + phosphate + H(+). The protein operates within cell wall biogenesis; peptidoglycan biosynthesis. Its function is as follows. Cell wall formation. The sequence is that of D-alanine--D-alanine ligase from Prochlorococcus marinus subsp. pastoris (strain CCMP1986 / NIES-2087 / MED4).